The following is a 208-amino-acid chain: MKIVEVKHPLVKHKLGLMREHDISTKRFRELASEVGSLLTYEATADLETEKVTIEGWNGPVEVEQIKGKKITVVPILRAGLGMMEGVLEHVPSARISVVGIYRNEETLEPVPYFQKLVSNIDERMALVVDPMLATGGSMIATIDLLKNAGCTSIKVLVLVAAPEGIAALEKAHPDVELYTASVDKGLNEHGYIIPGLGDAGDKIFGTK.

5-phospho-alpha-D-ribose 1-diphosphate contacts are provided by residues Arg-78, Arg-103, and 130–138 (DPMLATGGS). Uracil is bound by residues Ile-193 and 198-200 (GDA). Asp-199 is a binding site for 5-phospho-alpha-D-ribose 1-diphosphate.

The protein belongs to the UPRTase family. It depends on Mg(2+) as a cofactor.

The catalysed reaction is UMP + diphosphate = 5-phospho-alpha-D-ribose 1-diphosphate + uracil. The protein operates within pyrimidine metabolism; UMP biosynthesis via salvage pathway; UMP from uracil: step 1/1. Allosterically activated by GTP. Functionally, catalyzes the conversion of uracil and 5-phospho-alpha-D-ribose 1-diphosphate (PRPP) to UMP and diphosphate. In Klebsiella pneumoniae subsp. pneumoniae (strain ATCC 700721 / MGH 78578), this protein is Uracil phosphoribosyltransferase.